A 452-amino-acid chain; its full sequence is Prephenate dehydrogenase [NADP(+)] (452 aa).

An NADP(+)-binding site is contributed by K14 to D43. Residues K14 to D297 form the Prephenate/arogenate dehydrogenase domain.

The protein belongs to the prephenate/arogenate dehydrogenase family.

The enzyme catalyses prephenate + NADP(+) = 3-(4-hydroxyphenyl)pyruvate + CO2 + NADPH. Its pathway is amino-acid biosynthesis; L-tyrosine biosynthesis; (4-hydroxyphenyl)pyruvate from prephenate (NADP(+) route): step 1/1. The sequence is that of Prephenate dehydrogenase [NADP(+)] (TYR1) from Saccharomyces cerevisiae (strain ATCC 204508 / S288c) (Baker's yeast).